The following is a 100-amino-acid chain: Large ribosomal subunit protein bL28 (100 aa).

The tract at residues Met1–Ser21 is disordered. The segment covering Gln10–Ser19 has biased composition (polar residues).

This sequence belongs to the bacterial ribosomal protein bL28 family.

The polypeptide is Large ribosomal subunit protein bL28 (Ehrlichia canis (strain Jake)).